Reading from the N-terminus, the 208-residue chain is uncharacterized protein (208 aa).

Disordered regions lie at residues 1–78 (MDLF…SPTE) and 154–208 (RRRS…PRNY). The segment covering 40-51 (KNHKKAQPRRTT) has biased composition (basic residues). The span at 179-197 (ANSSSPNPTATGSETSYGS) shows a compositional bias: polar residues.

This is an uncharacterized protein from Caenorhabditis elegans.